The primary structure comprises 454 residues: tRNA modification GTPase MnmE (454 aa).

(6S)-5-formyl-5,6,7,8-tetrahydrofolate contacts are provided by Arg-23, Glu-80, and Lys-120. The TrmE-type G domain occupies 216 to 377; it reads GMKVVIAGRP…LRNHLKQSMG (162 aa). Asn-226 is a K(+) binding site. GTP-binding positions include 226 to 231, 245 to 251, 270 to 273, 335 to 338, and 358 to 360; these read NAGKSS, TDIAGTT, DTAG, NKAD, and SAR. Ser-230 is a Mg(2+) binding site. 3 residues coordinate K(+): Thr-245, Ile-247, and Thr-250. Position 251 (Thr-251) interacts with Mg(2+). A (6S)-5-formyl-5,6,7,8-tetrahydrofolate-binding site is contributed by Lys-454.

This sequence belongs to the TRAFAC class TrmE-Era-EngA-EngB-Septin-like GTPase superfamily. TrmE GTPase family. As to quaternary structure, homodimer. Heterotetramer of two MnmE and two MnmG subunits. K(+) is required as a cofactor.

It is found in the cytoplasm. Exhibits a very high intrinsic GTPase hydrolysis rate. Involved in the addition of a carboxymethylaminomethyl (cmnm) group at the wobble position (U34) of certain tRNAs, forming tRNA-cmnm(5)s(2)U34. The polypeptide is tRNA modification GTPase MnmE (Salmonella choleraesuis (strain SC-B67)).